Here is a 622-residue protein sequence, read N- to C-terminus: Chaperone protein HscA homolog (622 aa).

Belongs to the heat shock protein 70 family.

In terms of biological role, chaperone involved in the maturation of iron-sulfur cluster-containing proteins. Has a low intrinsic ATPase activity which is markedly stimulated by HscB. This is Chaperone protein HscA homolog from Burkholderia cenocepacia (strain ATCC BAA-245 / DSM 16553 / LMG 16656 / NCTC 13227 / J2315 / CF5610) (Burkholderia cepacia (strain J2315)).